The primary structure comprises 432 residues: Adenylosuccinate synthetase (432 aa).

Residues 13–19 (GDEGKGK) and 41–43 (GHT) contribute to the GTP site. Catalysis depends on Asp-14, which acts as the Proton acceptor. Residues Asp-14 and Gly-41 each coordinate Mg(2+). IMP contacts are provided by residues 14-17 (DEGK), 39-42 (NAGH), Thr-130, Arg-144, Gln-225, Thr-240, and Arg-304. The Proton donor role is filled by His-42. 300 to 306 (ATTGRSR) contacts substrate. Residues Arg-306, 332–334 (KLD), and 415–417 (STG) contribute to the GTP site.

The protein belongs to the adenylosuccinate synthetase family. In terms of assembly, homodimer. Mg(2+) is required as a cofactor.

It localises to the cytoplasm. It catalyses the reaction IMP + L-aspartate + GTP = N(6)-(1,2-dicarboxyethyl)-AMP + GDP + phosphate + 2 H(+). It participates in purine metabolism; AMP biosynthesis via de novo pathway; AMP from IMP: step 1/2. Its function is as follows. Plays an important role in the de novo pathway of purine nucleotide biosynthesis. Catalyzes the first committed step in the biosynthesis of AMP from IMP. The polypeptide is Adenylosuccinate synthetase (Yersinia pestis bv. Antiqua (strain Antiqua)).